The sequence spans 368 residues: D-Ala-D/L-Ala epimerase (368 aa).

Residues T135 and K160 to K162 contribute to the substrate site. Mg(2+) contacts are provided by D190, E216, and D241. Substrate is bound by residues K265 and D318–D320.

Belongs to the mandelate racemase/muconate lactonizing enzyme family. The cofactor is Mg(2+).

Its function is as follows. Catalyzes the epimerization of D-Ala-D-Ala to D-Ala-L-Ala. Has broad substrate specificity and catalyzes the epimerization of a variety of dipeptides containing an N-terminal Ala followed by a hydrophobic or polar residue, such as Val, Ser and Met (in vitro). The chain is D-Ala-D/L-Ala epimerase (tfdD) from Cytophaga hutchinsonii (strain ATCC 33406 / DSM 1761 / CIP 103989 / NBRC 15051 / NCIMB 9469 / D465).